Consider the following 185-residue polypeptide: Hypoxanthine/guanine phosphoribosyltransferase (185 aa).

Belongs to the purine/pyrimidine phosphoribosyltransferase family. Archaeal HPRT subfamily. Homodimer.

The protein localises to the cytoplasm. It carries out the reaction IMP + diphosphate = hypoxanthine + 5-phospho-alpha-D-ribose 1-diphosphate. It catalyses the reaction GMP + diphosphate = guanine + 5-phospho-alpha-D-ribose 1-diphosphate. Its pathway is purine metabolism; IMP biosynthesis via salvage pathway; IMP from hypoxanthine: step 1/1. Catalyzes a salvage reaction resulting in the formation of IMP that is energically less costly than de novo synthesis. This is Hypoxanthine/guanine phosphoribosyltransferase (hpt) from Methanococcus maripaludis (strain DSM 14266 / JCM 13030 / NBRC 101832 / S2 / LL).